The primary structure comprises 200 residues: Regulator of G-protein signaling 16 (200 aa).

S-palmitoyl cysteine attachment occurs at residues C2 and C12. Residues 65–181 (SFDLLLSSKN…LKSPAYRDLA (117 aa)) form the RGS domain. Phosphotyrosine is present on residues Y168 and Y177.

As to quaternary structure, interacts with GNAI1 and GNAQ. Interacts with GNAI3, GNAI3 and GNAO1. In terms of assembly, (Microbial infection) Interacts with porcine circovirus 2 ORF3 protein. Palmitoylated on Cys-2 and/or Cys-12. In terms of processing, phosphorylated. Phosphorylation at Tyr-168 by EGFR enhances GTPase accelerating (GAP) activity toward GNAI1.

It localises to the membrane. Regulates G protein-coupled receptor signaling cascades. Inhibits signal transduction by increasing the GTPase activity of G protein alpha subunits, thereby driving them into their inactive GDP-bound form. Plays an important role in the phototransduction cascade by regulating the lifetime and effective concentration of activated transducin alpha. May regulate extra and intracellular mitogenic signals. Its function is as follows. (Microbial infection) Gets inactivated and/or degraded by porcine circovirus 2 ORF3 protein, leading to enhanced expression of IL-6 and IL-8 in infected lymphocytes. This would explain chronic inflammatory response of PCV2 infected pigs. This is Regulator of G-protein signaling 16 (RGS16) from Sus scrofa (Pig).